The following is a 331-amino-acid chain: Ketol-acid reductoisomerase (NADP(+)) (331 aa).

One can recognise a KARI N-terminal Rossmann domain in the interval 2 to 182; it reads ARMYYDQDAN…GGTRAGILET (181 aa). Residues 25 to 28, Ser-51, Ser-53, and 83 to 86 each bind NADP(+); these read YGSQ and DEVQ. Residue His-108 is part of the active site. Residue Gly-134 coordinates NADP(+). Positions 183-328 constitute a KARI C-terminal knotted domain; the sequence is TFREETETDL…KDLRAMFSWL (146 aa). Mg(2+) is bound by residues Asp-191, Glu-195, Glu-227, and Glu-231. Ser-252 is a binding site for substrate.

Belongs to the ketol-acid reductoisomerase family. Homooctamer. Mg(2+) is required as a cofactor.

The enzyme catalyses (2R)-2,3-dihydroxy-3-methylbutanoate + NADP(+) = (2S)-2-acetolactate + NADPH + H(+). The catalysed reaction is (2R,3R)-2,3-dihydroxy-3-methylpentanoate + NADP(+) = (S)-2-ethyl-2-hydroxy-3-oxobutanoate + NADPH + H(+). The protein operates within amino-acid biosynthesis; L-isoleucine biosynthesis; L-isoleucine from 2-oxobutanoate: step 2/4. Its pathway is amino-acid biosynthesis; L-valine biosynthesis; L-valine from pyruvate: step 2/4. Functionally, involved in the biosynthesis of branched-chain amino acids (BCAA). Catalyzes an alkyl-migration followed by a ketol-acid reduction of (S)-2-acetolactate (S2AL) to yield (R)-2,3-dihydroxy-isovalerate. In the isomerase reaction, S2AL is rearranged via a Mg-dependent methyl migration to produce 3-hydroxy-3-methyl-2-ketobutyrate (HMKB). In the reductase reaction, this 2-ketoacid undergoes a metal-dependent reduction by NADPH to yield (R)-2,3-dihydroxy-isovalerate. In Synechocystis sp. (strain ATCC 27184 / PCC 6803 / Kazusa), this protein is Ketol-acid reductoisomerase (NADP(+)).